The primary structure comprises 351 residues: UDP-3-O-acylglucosamine N-acyltransferase 1 (351 aa).

Catalysis depends on H237, which acts as the Proton acceptor.

It belongs to the transferase hexapeptide repeat family. LpxD subfamily. Homotrimer.

The enzyme catalyses a UDP-3-O-[(3R)-3-hydroxyacyl]-alpha-D-glucosamine + a (3R)-hydroxyacyl-[ACP] = a UDP-2-N,3-O-bis[(3R)-3-hydroxyacyl]-alpha-D-glucosamine + holo-[ACP] + H(+). The protein operates within bacterial outer membrane biogenesis; LPS lipid A biosynthesis. Functionally, catalyzes the N-acylation of UDP-3-O-acylglucosamine using 3-hydroxyacyl-ACP as the acyl donor. Is involved in the biosynthesis of lipid A, a phosphorylated glycolipid that anchors the lipopolysaccharide to the outer membrane of the cell. The polypeptide is UDP-3-O-acylglucosamine N-acyltransferase 1 (Legionella pneumophila (strain Paris)).